Here is a 164-residue protein sequence, read N- to C-terminus: ATP synthase subunit b (164 aa).

A helical transmembrane segment spans residues 4–24; that stretch reads IHFDLTLVVQVLSFLLLVYIL.

The protein belongs to the ATPase B chain family. F-type ATPases have 2 components, F(1) - the catalytic core - and F(0) - the membrane proton channel. F(1) has five subunits: alpha(3), beta(3), gamma(1), delta(1), epsilon(1). F(0) has three main subunits: a(1), b(2) and c(10-14). The alpha and beta chains form an alternating ring which encloses part of the gamma chain. F(1) is attached to F(0) by a central stalk formed by the gamma and epsilon chains, while a peripheral stalk is formed by the delta and b chains.

The protein resides in the cell membrane. In terms of biological role, f(1)F(0) ATP synthase produces ATP from ADP in the presence of a proton or sodium gradient. F-type ATPases consist of two structural domains, F(1) containing the extramembraneous catalytic core and F(0) containing the membrane proton channel, linked together by a central stalk and a peripheral stalk. During catalysis, ATP synthesis in the catalytic domain of F(1) is coupled via a rotary mechanism of the central stalk subunits to proton translocation. Its function is as follows. Component of the F(0) channel, it forms part of the peripheral stalk, linking F(1) to F(0). The polypeptide is ATP synthase subunit b (Desulfitobacterium hafniense (strain Y51)).